Here is a 187-residue protein sequence, read N- to C-terminus: Large ribosomal subunit protein uL13 (187 aa).

Belongs to the universal ribosomal protein uL13 family.

The protein is Large ribosomal subunit protein uL13 (rpl13a) of Dictyostelium discoideum (Social amoeba).